The sequence spans 242 residues: Type III pantothenate kinase (242 aa).

Aspartate 7–lysine 14 serves as a coordination point for ATP. Residues tyrosine 91 and glycine 98–arginine 101 contribute to the substrate site. The active-site Proton acceptor is the aspartate 100. Threonine 121 serves as a coordination point for ATP. A substrate-binding site is contributed by threonine 171.

Belongs to the type III pantothenate kinase family. Homodimer. The cofactor is NH4(+). Requires K(+) as cofactor.

The protein localises to the cytoplasm. The enzyme catalyses (R)-pantothenate + ATP = (R)-4'-phosphopantothenate + ADP + H(+). It functions in the pathway cofactor biosynthesis; coenzyme A biosynthesis; CoA from (R)-pantothenate: step 1/5. Functionally, catalyzes the phosphorylation of pantothenate (Pan), the first step in CoA biosynthesis. The protein is Type III pantothenate kinase of Xanthomonas euvesicatoria pv. vesicatoria (strain 85-10) (Xanthomonas campestris pv. vesicatoria).